The sequence spans 448 residues: Trigger factor (448 aa).

The region spanning 173 to 258 is the PPIase FKBP-type domain; that stretch reads SDRVTIDFVG…LKQIEWAHMP (86 aa).

This sequence belongs to the FKBP-type PPIase family. Tig subfamily.

The protein localises to the cytoplasm. It catalyses the reaction [protein]-peptidylproline (omega=180) = [protein]-peptidylproline (omega=0). Its function is as follows. Involved in protein export. Acts as a chaperone by maintaining the newly synthesized protein in an open conformation. Functions as a peptidyl-prolyl cis-trans isomerase. In Herminiimonas arsenicoxydans, this protein is Trigger factor.